The primary structure comprises 189 residues: uncharacterized protein (189 aa).

This sequence belongs to the mimivirus R457/R459 family.

It is found in the virion. This is an uncharacterized protein from Acanthamoeba polyphaga mimivirus (APMV).